The primary structure comprises 254 residues: H-2 class II histocompatibility antigen, I-E alpha chain (254 aa).

An N-terminal signal peptide occupies residues 1-24; the sequence is RSRALILGVLALTTMLSLCGGEDD. Positions 25–109 are alpha-1; the sequence is IEADHVAFYG…KDSNFTPAAN (85 aa). Residues 25–216 lie on the Extracellular side of the membrane; sequence IEADHVAFYG…IPAPMSELTE (192 aa). Residues N103 and N143 are each glycosylated (N-linked (GlcNAc...) asparagine). The alpha-2 stretch occupies residues 110 to 203; it reads EAPQATVFPK…GLEEPVLKHW (94 aa). Residues 112–204 form the Ig-like C1-type domain; that stretch reads PQATVFPKSP…LEEPVLKHWE (93 aa). Residues C132 and C188 are joined by a disulfide bond. The segment at 204-216 is connecting peptide; it reads EPEIPAPMSELTE. A helical membrane pass occupies residues 217 to 242; that stretch reads TVVCALGLSVGLVGIVVGTIFIIQGL. The Cytoplasmic segment spans residues 243–254; that stretch reads RSGGTSRHPGPL.

The protein belongs to the MHC class II family.

The protein localises to the membrane. This Mus musculus (Mouse) protein is H-2 class II histocompatibility antigen, I-E alpha chain.